The primary structure comprises 346 residues: MSKRGARTPGFWYDNNTPIPLPARILVPVYGAAIALRRALYRRGWRKRHGVPVPVIVVGNVTAGGTGKTPLTIALVAKLQEAGWTPGVASRGYGRDEAGKARWVEADTPVALGGDEPVLIAWKTGARVRVDSDRLAAARALVEAGCDIVICDDGLQHYRLARDVEIEVVDGQRRYGNGRLLPAGPLREPVARARDCDFRVVNLGQASTTAAPQAPDDAGFGEWQMRLSIDSVQPMDGKRAQPLSMLAGQRVHAVAGIAYPERFFAMLRARGIGVVPHAFPDHHVYRAADFSFGSRLPVLMTEKDAVKCRPFADEWLYSVPLKAELPAAFWVSLLDRLNKLASRQGV.

62–69 (TAGGTGKT) contacts ATP.

The protein belongs to the LpxK family.

It carries out the reaction a lipid A disaccharide + ATP = a lipid IVA + ADP + H(+). The protein operates within glycolipid biosynthesis; lipid IV(A) biosynthesis; lipid IV(A) from (3R)-3-hydroxytetradecanoyl-[acyl-carrier-protein] and UDP-N-acetyl-alpha-D-glucosamine: step 6/6. Transfers the gamma-phosphate of ATP to the 4'-position of a tetraacyldisaccharide 1-phosphate intermediate (termed DS-1-P) to form tetraacyldisaccharide 1,4'-bis-phosphate (lipid IVA). The protein is Tetraacyldisaccharide 4'-kinase of Xanthomonas oryzae pv. oryzae (strain MAFF 311018).